The sequence spans 317 residues: Methionyl-tRNA formyltransferase (317 aa).

111–114 (SLLP) contacts (6S)-5,6,7,8-tetrahydrofolate.

It belongs to the Fmt family.

The catalysed reaction is L-methionyl-tRNA(fMet) + (6R)-10-formyltetrahydrofolate = N-formyl-L-methionyl-tRNA(fMet) + (6S)-5,6,7,8-tetrahydrofolate + H(+). Its function is as follows. Attaches a formyl group to the free amino group of methionyl-tRNA(fMet). The formyl group appears to play a dual role in the initiator identity of N-formylmethionyl-tRNA by promoting its recognition by IF2 and preventing the misappropriation of this tRNA by the elongation apparatus. The chain is Methionyl-tRNA formyltransferase from Chlorobium phaeobacteroides (strain BS1).